Reading from the N-terminus, the 239-residue chain is Probable transcriptional regulatory protein BLi00754/BL02339 (239 aa).

It belongs to the TACO1 family. YeeN subfamily.

It is found in the cytoplasm. In Bacillus licheniformis (strain ATCC 14580 / DSM 13 / JCM 2505 / CCUG 7422 / NBRC 12200 / NCIMB 9375 / NCTC 10341 / NRRL NRS-1264 / Gibson 46), this protein is Probable transcriptional regulatory protein BLi00754/BL02339.